We begin with the raw amino-acid sequence, 364 residues long: Dual-specificity RNA methyltransferase RlmN (364 aa).

The active-site Proton acceptor is Glu-91. The Radical SAM core domain maps to 97–333 (ESDRGTLCIS…VTVRKTRGDD (237 aa)). Cys-104 and Cys-338 are oxidised to a cystine. [4Fe-4S] cluster-binding residues include Cys-111, Cys-115, and Cys-118. S-adenosyl-L-methionine-binding positions include 164–165 (GE), Ser-196, 218–220 (SLH), and Asn-295. Cys-338 serves as the catalytic S-methylcysteine intermediate.

This sequence belongs to the radical SAM superfamily. RlmN family. Requires [4Fe-4S] cluster as cofactor.

The protein resides in the cytoplasm. The enzyme catalyses adenosine(2503) in 23S rRNA + 2 reduced [2Fe-2S]-[ferredoxin] + 2 S-adenosyl-L-methionine = 2-methyladenosine(2503) in 23S rRNA + 5'-deoxyadenosine + L-methionine + 2 oxidized [2Fe-2S]-[ferredoxin] + S-adenosyl-L-homocysteine. The catalysed reaction is adenosine(37) in tRNA + 2 reduced [2Fe-2S]-[ferredoxin] + 2 S-adenosyl-L-methionine = 2-methyladenosine(37) in tRNA + 5'-deoxyadenosine + L-methionine + 2 oxidized [2Fe-2S]-[ferredoxin] + S-adenosyl-L-homocysteine. Specifically methylates position 2 of adenine 2503 in 23S rRNA and position 2 of adenine 37 in tRNAs. m2A2503 modification seems to play a crucial role in the proofreading step occurring at the peptidyl transferase center and thus would serve to optimize ribosomal fidelity. The sequence is that of Dual-specificity RNA methyltransferase RlmN from Neisseria meningitidis serogroup B (strain ATCC BAA-335 / MC58).